We begin with the raw amino-acid sequence, 364 residues long: Fructose-1,6-bisphosphatase class 1 2 (364 aa).

Residues Glu-101, Asp-123, Leu-125, and Asp-126 each coordinate Mg(2+). Substrate is bound by residues 126 to 129 (DGSS) and Asn-218. A Mg(2+)-binding site is contributed by Glu-290.

Belongs to the FBPase class 1 family. In terms of assembly, homotetramer. Mg(2+) is required as a cofactor.

Its subcellular location is the cytoplasm. It catalyses the reaction beta-D-fructose 1,6-bisphosphate + H2O = beta-D-fructose 6-phosphate + phosphate. It functions in the pathway carbohydrate biosynthesis; gluconeogenesis. In Cupriavidus necator (strain ATCC 17699 / DSM 428 / KCTC 22496 / NCIMB 10442 / H16 / Stanier 337) (Ralstonia eutropha), this protein is Fructose-1,6-bisphosphatase class 1 2.